The following is a 271-amino-acid chain: 3-methyl-2-oxobutanoate hydroxymethyltransferase (271 aa).

Mg(2+) is bound by residues D51 and D90. Residues 51–52 (DS), D90, and K119 each bind 3-methyl-2-oxobutanoate. E121 is a binding site for Mg(2+). Residue E188 is the Proton acceptor of the active site.

The protein belongs to the PanB family. Homodecamer; pentamer of dimers. The cofactor is Mg(2+).

It is found in the cytoplasm. It carries out the reaction 3-methyl-2-oxobutanoate + (6R)-5,10-methylene-5,6,7,8-tetrahydrofolate + H2O = 2-dehydropantoate + (6S)-5,6,7,8-tetrahydrofolate. It participates in cofactor biosynthesis; (R)-pantothenate biosynthesis; (R)-pantoate from 3-methyl-2-oxobutanoate: step 1/2. Catalyzes the reversible reaction in which hydroxymethyl group from 5,10-methylenetetrahydrofolate is transferred onto alpha-ketoisovalerate to form ketopantoate. The protein is 3-methyl-2-oxobutanoate hydroxymethyltransferase of Aromatoleum aromaticum (strain DSM 19018 / LMG 30748 / EbN1) (Azoarcus sp. (strain EbN1)).